The chain runs to 215 residues: Ribonuclease T (215 aa).

The Exonuclease domain occupies 20 to 194 (VVIDVETAGF…YDTERTAVLF (175 aa)). Mg(2+)-binding residues include aspartate 23, glutamate 25, histidine 181, and aspartate 186. The active-site Proton donor/acceptor is the histidine 181.

The protein belongs to the RNase T family. As to quaternary structure, homodimer. Mg(2+) is required as a cofactor.

Trims short 3' overhangs of a variety of RNA species, leaving a one or two nucleotide 3' overhang. Responsible for the end-turnover of tRNA: specifically removes the terminal AMP residue from uncharged tRNA (tRNA-C-C-A). Also appears to be involved in tRNA biosynthesis. This Shigella dysenteriae serotype 1 (strain Sd197) protein is Ribonuclease T.